The primary structure comprises 214 residues: Uridine kinase (214 aa).

ATP is bound at residue 15-22 (GASASGKS).

This sequence belongs to the uridine kinase family.

It localises to the cytoplasm. It carries out the reaction uridine + ATP = UMP + ADP + H(+). The enzyme catalyses cytidine + ATP = CMP + ADP + H(+). It functions in the pathway pyrimidine metabolism; CTP biosynthesis via salvage pathway; CTP from cytidine: step 1/3. The protein operates within pyrimidine metabolism; UMP biosynthesis via salvage pathway; UMP from uridine: step 1/1. The sequence is that of Uridine kinase from Aeromonas salmonicida (strain A449).